We begin with the raw amino-acid sequence, 159 residues long: Large ribosomal subunit protein uL15 (159 aa).

Residues 1–46 (MKLNELSPSVPKKNRKRIGRGNSSGWGKTAGKGSNGQNSRAGGGVK) form a disordered region. Residues 22–34 (NSSGWGKTAGKGS) show a composition bias toward gly residues.

This sequence belongs to the universal ribosomal protein uL15 family. In terms of assembly, part of the 50S ribosomal subunit.

Functionally, binds to the 23S rRNA. This Fusobacterium nucleatum subsp. nucleatum (strain ATCC 25586 / DSM 15643 / BCRC 10681 / CIP 101130 / JCM 8532 / KCTC 2640 / LMG 13131 / VPI 4355) protein is Large ribosomal subunit protein uL15.